A 589-amino-acid polypeptide reads, in one-letter code: Delta-like protein 3 (589 aa).

Residues 1–32 (MVSLQVSSLPQTLILAFLLPQALPAGVFELQI) form the signal peptide. The Extracellular segment spans residues 33–494 (HSFGPGPGPG…LRQADSQRFL (462 aa)). The DSL domain occupies 174 to 213 (ARCEPPAVGAACARLCRSRSAPSRCGPGLRPCTPFPDECE). EGF-like domains are found at residues 218–251 (SLTVCRAGCSPEHGYCEEPDECHCLEGWTGPLCT), 276–312 (GPGPCDGNPCANGGSCSETPGSFECACPRGFYGPRCE), 314–353 (SGVTCADGPCFNGGLCVGGEDPDSAYVCHCPPAFQGSNCE), 355–391 (RVDRCSLQPCQNGGLCLDLGHALRCRCRAGFAGPRCE), 393–429 (DLDDCAGRACANGGTCVEGGGARRCSCALGFGGRDCR), and 431–467 (RADPCASRPCAHGGRCYAHFSGLVCACAPGYMGVRCE). Cystine bridges form between cysteine 222–cysteine 233, cysteine 226–cysteine 239, cysteine 241–cysteine 250, cysteine 280–cysteine 291, cysteine 285–cysteine 300, cysteine 302–cysteine 311, cysteine 318–cysteine 329, cysteine 323–cysteine 341, cysteine 343–cysteine 352, cysteine 359–cysteine 370, cysteine 364–cysteine 379, cysteine 381–cysteine 390, cysteine 397–cysteine 408, cysteine 402–cysteine 417, cysteine 419–cysteine 428, cysteine 435–cysteine 446, cysteine 440–cysteine 455, and cysteine 457–cysteine 466. A helical transmembrane segment spans residues 495 to 515 (LPPALGLLAAAALAGAALLLI). Topologically, residues 516 to 589 (HVRRRGPGRD…PAPSIYAREA (74 aa)) are cytoplasmic. The tract at residues 552–574 (QDGAGDGPTSSADWNHPEDGDSR) is disordered.

As to quaternary structure, can bind and activate Notch-1 or another Notch receptor. Post-translationally, ubiquitinated by MIB (MIB1 or MIB2), leading to its endocytosis and subsequent degradation.

It localises to the membrane. Inhibits primary neurogenesis. May be required to divert neurons along a specific differentiation pathway. Plays a role in the formation of somite boundaries during segmentation of the paraxial mesoderm. This chain is Delta-like protein 3 (Dll3), found in Rattus norvegicus (Rat).